The following is a 216-amino-acid chain: Redox-sensing transcriptional repressor Rex (216 aa).

Positions 20 to 59 form a DNA-binding region, H-T-H motif; it reads QYYRLFKSLVEENVTRTNSQLISEKIGVDAATIRRDFSLF. 94–99 is a binding site for NAD(+); that stretch reads GVGNLG.

It belongs to the transcriptional regulatory Rex family. In terms of assembly, homodimer.

It localises to the cytoplasm. Modulates transcription in response to changes in cellular NADH/NAD(+) redox state. The sequence is that of Redox-sensing transcriptional repressor Rex from Lactococcus lactis subsp. cremoris (strain SK11).